The following is a 211-amino-acid chain: MPEHTSVEMEPPIAASLFGVRMPVAREFASQLGSRGEELGLIGPLEPPRLWSRHIINSVLVAPLLNPGVVGDIGTGAGLPGLVLAIARPDVDFVLIEPMERRVAWLEEQVAHLGLDNVQVRRARAEDVANEISLDQVTARAVSAFSKLIPLTVPLVKTGGELVLMKGANAEREVEAASRAIRKHHLEDVEVITLGAGQVDEVTRVIRARVA.

S-adenosyl-L-methionine is bound by residues Gly74, Leu79, 125–126, and Arg140; that span reads AE.

Belongs to the methyltransferase superfamily. RNA methyltransferase RsmG family.

It is found in the cytoplasm. In terms of biological role, specifically methylates the N7 position of guanine in position 518 of 16S rRNA. The polypeptide is Ribosomal RNA small subunit methyltransferase G (Clavibacter sepedonicus (Clavibacter michiganensis subsp. sepedonicus)).